The following is a 359-amino-acid chain: Guanine nucleotide-binding protein G(q) subunit alpha (359 aa).

S-palmitoyl cysteine attachment occurs at residues Cys9 and Cys10. A G-alpha domain is found at 38–359 (RELKLLLLGT…QLNLKEYNLV (322 aa)). The tract at residues 41-54 (KLLLLGTGESGKST) is G1 motif. 9 residues coordinate GTP: Ser50, Gly51, Lys52, Ser53, Thr54, Ser156, Leu180, Arg181, and Arg183. Ser53 contacts Mg(2+). Positions 178–186 (DVLRVRVPT) are G2 motif. Residue Thr186 coordinates Mg(2+). A G3 motif region spans residues 201-210 (FRMVDVGGQR). Residue Gln209 is modified to 5-glutamyl histamine. Residues 270 to 277 (ILFLNKKD) are G4 motif. Positions 274, 275, 277, and 331 each coordinate GTP. The interval 329–334 (TCATDT) is G5 motif.

Belongs to the G-alpha family. G(q) subfamily. In terms of assembly, g proteins are composed of 3 units; alpha, beta and gamma. The alpha chain contains the guanine nucleotide binding site. Interacts (GDP-bound form) with RIC8A (via C-terminus); promoting GNAQ folding and association with the plasma membrane. Binds NHERF1. Forms a complex with PECAM1 and BDKRB2. Interacts with GAS2L2. In terms of processing, palmitoylated by ZDHHC3 and ZDHHC7. Palmitoylation occurs in the Golgi and participates in the localization of GNAQ to the plasma membrane. Post-translationally, histaminylated at Gln-209 residues by TGM2.

The protein localises to the cell membrane. Its subcellular location is the golgi apparatus. The protein resides in the nucleus. It is found in the nucleus membrane. It carries out the reaction GTP + H2O = GDP + phosphate + H(+). In terms of biological role, guanine nucleotide-binding proteins (G proteins) function as transducers downstream of G protein-coupled receptors (GPCRs) in numerous signaling cascades. The alpha chain contains the guanine nucleotide binding site and alternates between an active, GTP-bound state and an inactive, GDP-bound state. Signaling by an activated GPCR promotes GDP release and GTP binding. The alpha subunit has a low GTPase activity that converts bound GTP to GDP, thereby terminating the signal. Both GDP release and GTP hydrolysis are modulated by numerous regulatory proteins. Signaling is mediated via phospholipase C-beta-dependent inositol lipid hydrolysis for signal propagation: activates phospholipase C-beta: following GPCR activation, GNAQ activates PLC-beta (PLCB1, PLCB2, PLCB3 or PLCB4), leading to production of diacylglycerol (DAG) and inositol 1,4,5-trisphosphate (IP3). Required for platelet activation. Regulates B-cell selection and survival and is required to prevent B-cell-dependent autoimmunity. Regulates chemotaxis of BM-derived neutrophils and dendritic cells (in vitro). Transduces FFAR4 signaling in response to long-chain fatty acids (LCFAs). Together with GNA11, required for heart development. This is Guanine nucleotide-binding protein G(q) subunit alpha (Gnaq) from Rattus norvegicus (Rat).